The primary structure comprises 291 residues: 4-hydroxy-tetrahydrodipicolinate synthase (291 aa).

T45 is a binding site for pyruvate. Residue Y131 is the Proton donor/acceptor of the active site. K159 (schiff-base intermediate with substrate) is an active-site residue. Residue I202 coordinates pyruvate.

This sequence belongs to the DapA family. Homotetramer; dimer of dimers.

It is found in the cytoplasm. It catalyses the reaction L-aspartate 4-semialdehyde + pyruvate = (2S,4S)-4-hydroxy-2,3,4,5-tetrahydrodipicolinate + H2O + H(+). Its pathway is amino-acid biosynthesis; L-lysine biosynthesis via DAP pathway; (S)-tetrahydrodipicolinate from L-aspartate: step 3/4. Its function is as follows. Catalyzes the condensation of (S)-aspartate-beta-semialdehyde [(S)-ASA] and pyruvate to 4-hydroxy-tetrahydrodipicolinate (HTPA). This chain is 4-hydroxy-tetrahydrodipicolinate synthase, found in Methanococcoides burtonii (strain DSM 6242 / NBRC 107633 / OCM 468 / ACE-M).